We begin with the raw amino-acid sequence, 1484 residues long: Chromosome partition protein MukB (1484 aa).

34 to 41 (GGNGAGKS) serves as a coordination point for ATP. Coiled-coil stretches lie at residues 326-418 (LEAD…QYNQ), 444-472 (LDTF…QTAH), and 509-602 (RHLA…QRAP). The tract at residues 666–783 (PGGAEDQRLN…SLPIFGRAAR (118 aa)) is flexible hinge. Coiled-coil stretches lie at residues 835–923 (EAEI…AKLE), 977–1116 (EMLS…AKAG), and 1209–1265 (VEAI…LQSV). The tract at residues 1049-1074 (ADSGAEERARQRRDELHAQLSNNRSR) is disordered. Positions 1051-1065 (SGAEERARQRRDELH) are enriched in basic and acidic residues.

Belongs to the SMC family. MukB subfamily. In terms of assembly, homodimerization via its hinge domain. Binds to DNA via its C-terminal region. Interacts, and probably forms a ternary complex, with MukE and MukF via its C-terminal region. The complex formation is stimulated by calcium or magnesium. Interacts with tubulin-related protein FtsZ.

Its subcellular location is the cytoplasm. The protein resides in the nucleoid. Plays a central role in chromosome condensation, segregation and cell cycle progression. Functions as a homodimer, which is essential for chromosome partition. Involved in negative DNA supercoiling in vivo, and by this means organize and compact chromosomes. May achieve or facilitate chromosome segregation by condensation DNA from both sides of a centrally located replisome during cell division. In Salmonella dublin (strain CT_02021853), this protein is Chromosome partition protein MukB.